A 921-amino-acid chain; its full sequence is Isoleucine--tRNA ligase (921 aa).

The short motif at 57–67 is the 'HIGH' region element; that stretch reads PYANGDIHMGH. Residue Glu553 coordinates L-isoleucyl-5'-AMP. The short motif at 594 to 598 is the 'KMSKS' region element; that stretch reads KMSKS. Residue Lys597 coordinates ATP.

Belongs to the class-I aminoacyl-tRNA synthetase family. IleS type 1 subfamily. In terms of assembly, monomer.

It localises to the cytoplasm. The enzyme catalyses tRNA(Ile) + L-isoleucine + ATP = L-isoleucyl-tRNA(Ile) + AMP + diphosphate. Catalyzes the attachment of isoleucine to tRNA(Ile). As IleRS can inadvertently accommodate and process structurally similar amino acids such as valine, to avoid such errors it has two additional distinct tRNA(Ile)-dependent editing activities. One activity is designated as 'pretransfer' editing and involves the hydrolysis of activated Val-AMP. The other activity is designated 'posttransfer' editing and involves deacylation of mischarged Val-tRNA(Ile). The polypeptide is Isoleucine--tRNA ligase (Bacillus subtilis (strain 168)).